The primary structure comprises 67 residues: Sec-independent protein translocase protein TatA (67 aa).

The helical transmembrane segment at 1-21 (MFGIGIQELLVVLVLVLLVFG) threads the bilayer. A disordered region spans residues 46-67 (PDEIDITPGKKNGKTDKDDKQA). Positions 58-67 (GKTDKDDKQA) are enriched in basic and acidic residues.

The protein belongs to the TatA/E family. As to quaternary structure, the Tat system comprises two distinct complexes: a TatABC complex, containing multiple copies of TatA, TatB and TatC subunits, and a separate TatA complex, containing only TatA subunits. Substrates initially bind to the TatABC complex, which probably triggers association of the separate TatA complex to form the active translocon.

It is found in the cell inner membrane. Part of the twin-arginine translocation (Tat) system that transports large folded proteins containing a characteristic twin-arginine motif in their signal peptide across membranes. TatA could form the protein-conducting channel of the Tat system. The sequence is that of Sec-independent protein translocase protein TatA from Nitratidesulfovibrio vulgaris (strain DSM 19637 / Miyazaki F) (Desulfovibrio vulgaris).